The chain runs to 84 residues: Small ribosomal subunit protein uS17 (84 aa).

This sequence belongs to the universal ribosomal protein uS17 family. Part of the 30S ribosomal subunit.

Its function is as follows. One of the primary rRNA binding proteins, it binds specifically to the 5'-end of 16S ribosomal RNA. The chain is Small ribosomal subunit protein uS17 from Alkaliphilus oremlandii (strain OhILAs) (Clostridium oremlandii (strain OhILAs)).